The sequence spans 40 residues: uncharacterized protein (40 aa).

This is an uncharacterized protein from Leptolyngbya boryana (Plectonema boryanum).